The following is a 916-amino-acid chain: DNA mismatch repair protein MutS (916 aa).

Residues 1 to 47 (MSEALSVPAAEGENTVTASESPDLAATSARAEKVGKQEKPEKAEKQS) are disordered. The segment covering 30–45 (RAEKVGKQEKPEKAEK) has biased composition (basic and acidic residues). 656 to 663 (GPNMGGKS) serves as a coordination point for ATP. Positions 843–861 (ADATPTPQMDLFSAQSSPS) are enriched in polar residues. A disordered region spans residues 843–880 (ADATPTPQMDLFSAQSSPSADDEDDKSAGQSAVPPAQA).

This sequence belongs to the DNA mismatch repair MutS family.

In terms of biological role, this protein is involved in the repair of mismatches in DNA. It is possible that it carries out the mismatch recognition step. This protein has a weak ATPase activity. This Cupriavidus metallidurans (strain ATCC 43123 / DSM 2839 / NBRC 102507 / CH34) (Ralstonia metallidurans) protein is DNA mismatch repair protein MutS.